A 905-amino-acid chain; its full sequence is Phosphatidylethanolamine N-methyltransferase (905 aa).

2 stretches are compositionally biased toward polar residues: residues 1 to 22 and 40 to 58; these read MTNQ…STSV and DSNG…SSLN. The segment at 1–73 is disordered; the sequence is MTNQIPSASS…SEPERYGCTP (73 aa). At 1 to 104 the chain is on the lumenal side; the sequence is MTNQIPSASS…DPRFSKTPWD (104 aa). A helical membrane pass occupies residues 105–125; it reads WIVISSILAQVLLFFMTTGAV. Residues 126–128 lie on the Cytoplasmic side of the membrane; it reads RRY. Residues 129 to 149 form a helical membrane-spanning segment; sequence SMMLCFFFWRISYDAGIGFLL. Topologically, residues 150 to 209 are lumenal; it reads HMQSNHRKVVTWISDFGFFDKENHPKLYDLTKKQLISKMDSSYNYDTSPLEFNSWLVFRH. The chain crosses the membrane as a helical span at residues 210–230; the sequence is FVDLILMCDFCSYILMGLAWT. The Cytoplasmic portion of the chain corresponds to 231 to 236; sequence CWPKVN. Residues 237–257 traverse the membrane as a helical segment; it reads IILQFLRIFGGIALIVFNYWV. Over 258–268 the chain is Lumenal; that stretch reads KMDAHRVVRDY. A helical membrane pass occupies residues 269–289; the sequence is AWYWGDFFFLLRSSLVFNGVF. Residues 290–313 lie on the Cytoplasmic side of the membrane; that stretch reads ELAPHPMYSVGYAGYYGMSLLTGS. A helical membrane pass occupies residues 314-334; sequence YAVLFASILAHAAQFGFLLFV. At 335 to 379 the chain is on the lumenal side; that stretch reads ENPHIERTYGTDINHARLSPRGEDNEFELPPEHDLVGFVNFDFTR. Ser-353 carries the post-translational modification Phosphoserine. Residues 380–400 traverse the membrane as a helical segment; that stretch reads ISDVALLIIALYSIFIILLSS. The Cytoplasmic portion of the chain corresponds to 401–408; it reads NSHYSQFW. A helical membrane pass occupies residues 409 to 429; it reads AIFQAFVWRFLHSIIHAFILF. At 430–456 the chain is on the lumenal side; that stretch reads YQSKSKAWTKHFIRNGESAAYAWSQWK. The helical transmembrane segment at 457 to 479 threads the bilayer; the sequence is GLYNLTLNMSYISFVMAAWKLYH. The Cytoplasmic segment spans residues 480 to 493; sequence LPSNWTYGLVSLRH. The chain crosses the membrane as a helical span at residues 494-514; sequence ALGFGLIALHIYTSVSIYEDL. The Lumenal portion of the chain corresponds to 515-552; sequence GQYGWFYGDFFLPSRSPKLVYQGIYRYVNNPERFLGCS. A helical transmembrane segment spans residues 553–573; sequence AYWGLALISSSAWIFLIAILA. At 574–905 the chain is on the cytoplasmic side; the sequence is QLSNLAIIRL…FDGPSGAKDD (332 aa).

Belongs to the class VI-like SAM-binding methyltransferase superfamily. CHO2 family.

The protein localises to the endoplasmic reticulum membrane. The enzyme catalyses a 1,2-diacyl-sn-glycero-3-phosphoethanolamine + S-adenosyl-L-methionine = a 1,2-diacyl-sn-glycero-3-phospho-N-methylethanolamine + S-adenosyl-L-homocysteine + H(+). The protein operates within phospholipid metabolism; phosphatidylcholine biosynthesis. Functionally, catalyzes the first step of the methylation pathway of phosphatidylcholine biosynthesis, the SAM-dependent methylation of phosphatidylethanolamine (PE) to phosphatidylmonomethylethanolamine (PMME). The sequence is that of Phosphatidylethanolamine N-methyltransferase from Schizosaccharomyces pombe (strain 972 / ATCC 24843) (Fission yeast).